We begin with the raw amino-acid sequence, 358 residues long: DnaJ homolog subfamily B member 11 (358 aa).

Positions 1–22 (MAPQNLGTFCLLLLYLIGTVIA) are cleaved as a signal peptide. A J domain is found at 25-90 (DFYKILGVPR…EKRKQYDTYG (66 aa)). Threonine 188 is modified (phosphothreonine). An N-linked (GlcNAc...) asparagine glycan is attached at asparagine 261.

Part of a large chaperone multiprotein complex comprising DNAJB11, HSP90B1, HSPA5, HYOU, PDIA2, PDIA4, PDIA6, PPIB, SDF2L1, UGGT1 and very small amounts of ERP29, but not, or at very low levels, CALR nor CANX. Binds to denatured substrates in an ATP-independent manner. Interacts via the J domain with HSPA5 in an ATP-dependent manner. Contains high-mannose Endo H-sensitive carbohydrates. In terms of processing, cys-169, Cys-171, Cys-193 and Cys-196 form intramolecular disulfide bonds. The preferential partner for each Cys is not known.

It is found in the endoplasmic reticulum lumen. Functionally, as a co-chaperone for HSPA5 it is required for proper folding, trafficking or degradation of proteins. Binds directly to both unfolded proteins that are substrates for ERAD and nascent unfolded peptide chains, but dissociates from the HSPA5-unfolded protein complex before folding is completed. May help recruiting HSPA5 and other chaperones to the substrate. Stimulates HSPA5 ATPase activity. It is necessary for maturation and correct trafficking of PKD1. This Bos taurus (Bovine) protein is DnaJ homolog subfamily B member 11 (DNAJB11).